Consider the following 580-residue polypeptide: Acyl-coenzyme A synthetase ACSM4, mitochondrial (580 aa).

The N-terminal 22 residues, Met1 to His22, are a transit peptide targeting the mitochondrion. Residues Thr229–Lys237, Glu368–Thr373, Asp455, Arg470, and Lys566 contribute to the ATP site.

This sequence belongs to the ATP-dependent AMP-binding enzyme family. It depends on Mg(2+) as a cofactor. The cofactor is Mn(2+). Detected in adult olfactory epithelium.

The protein resides in the mitochondrion. The enzyme catalyses a medium-chain fatty acid + ATP + CoA = a medium-chain fatty acyl-CoA + AMP + diphosphate. The catalysed reaction is hexanoate + ATP + CoA = hexanoyl-CoA + AMP + diphosphate. It catalyses the reaction octanoate + ATP + CoA = octanoyl-CoA + AMP + diphosphate. It carries out the reaction decanoate + ATP + CoA = decanoyl-CoA + AMP + diphosphate. The enzyme catalyses dodecanoate + ATP + CoA = dodecanoyl-CoA + AMP + diphosphate. Its function is as follows. Catalyzes the activation of fatty acids by CoA to produce an acyl-CoA, the first step in fatty acid metabolism. Capable of activating medium-chain fatty acids with a preference for C6-12 fatty acids. The protein is Acyl-coenzyme A synthetase ACSM4, mitochondrial (Acsm4) of Rattus norvegicus (Rat).